We begin with the raw amino-acid sequence, 1101 residues long: Protein diaphanous homolog 2 (1101 aa).

Met-1 carries the post-translational modification N-acetylmethionine. The tract at residues 1-44 (MEQPGAAASGAGGGSEEPGGGRSNKRSAGNRAANEEETKNKPKL) is disordered. Positions 10–22 (GAGGGSEEPGGGR) are enriched in gly residues. In terms of domain architecture, GBD/FH3 spans 98 to 464 (SLNLSEKEVL…QIVLHCSGMD (367 aa)). 2 coiled-coil regions span residues 366 to 418 (KEKE…MLKD) and 487 to 547 (KAKV…SSSG). Polar residues predominate over residues 536–546 (RTQAQVLSSSS). Disordered regions lie at residues 536-594 (RTQA…PPPP), 1010-1048 (NKRR…DINK), and 1070-1101 (RDRR…ISSK). A compositionally biased stretch (pro residues) spans 549–594 (PGPPAAPPLPGVGPPPPPPAPPLPGGAPLPPPPPPLPGMMGIPPPP). In terms of domain architecture, FH1 spans 549–623 (PGPPAAPPLP…PPPGISLNLP (75 aa)). The region spanning 628-1028 (QKKMYKPEVS…TRRAKLAKEK (401 aa)) is the FH2 domain. A coiled-coil region spans residues 903-1053 (SASKVSAQIL…IDINKEGDET (151 aa)). Composition is skewed to basic and acidic residues over residues 1010–1035 (NKRR…EKLE) and 1078–1090 (RNPD…LERS). In terms of domain architecture, DAD spans 1051–1081 (DETGVMDNLLEALQSGAAFRDRRKRIPRNPD).

The protein belongs to the formin homology family. Diaphanous subfamily. Isoform 3 interacts with RHOD in the GTP-bound form. As to expression, expressed in testis, ovary, small intestine, prostate, lung, liver, kidney and leukocytes.

It is found in the cytoplasm. Its subcellular location is the cytosol. It localises to the early endosome. Functionally, could be involved in oogenesis. Involved in the regulation of endosome dynamics. Implicated in a novel signal transduction pathway, in which isoform 3 and CSK are sequentially activated by RHOD to regulate the motility of early endosomes through interactions with the actin cytoskeleton. This Homo sapiens (Human) protein is Protein diaphanous homolog 2 (DIAPH2).